Consider the following 223-residue polypeptide: Glycoprotein 42 (223 aa).

Residues 1-8 lie on the Intravirion side of the membrane; the sequence is MVSFKQVR. The chain crosses the membrane as a helical span at residues 9 to 29; the sequence is VPLFTAIALVIVLLLAYFLPP. Topologically, residues 30–223 are virion surface; the sequence is RVRGGGRVAA…CLCVSQRSNS (194 aa). Disulfide bonds link cysteine 99–cysteine 138, cysteine 102–cysteine 115, cysteine 128–cysteine 214, cysteine 132–cysteine 216, and cysteine 192–cysteine 208. Residues 111–217 enclose the C-type lectin domain; that stretch reads YKGCCFYFTK…CSFLKPCLCV (107 aa).

This sequence belongs to the epstein barr virus gp42 family. In terms of assembly, forms a complex with gp25 and gp85 via its N-terminus; this complex is used for invasion of B-lymphocytes. Interacts with human HLA-DRA and HLA-DRB1.

It localises to the virion membrane. It is found in the host membrane. Its function is as follows. Plays a role in virion attachment to host B-lymphocytes, through binding to leukocyte antigen (HLA) class II and subsequently participates in fusion of the virion with host membranes. May act as a tropism switch that directs fusion with B-lymphocytes and inhibits fusion with epithelial cells. Additionally, hampers T-cell recognition via HLA class II molecules through steric hindrance of T-cell receptor-class II-peptide interaction. Functionally, soluble gp42 inhibits HLA class II-restricted antigen presentation to T-cells through binding to immature and mature HLA class II complexes. The sequence is that of Glycoprotein 42 from Epstein-Barr virus (strain B95-8) (HHV-4).